Here is a 571-residue protein sequence, read N- to C-terminus: Dual specificity testis-specific protein kinase 2 (571 aa).

The 256-residue stretch at 58–313 (DFTCEKIGSG…EIGKTLEEIL (256 aa)) folds into the Protein kinase domain. Residues 64 to 72 (IGSGFFSEV) and Lys87 contribute to the ATP site. The active-site Proton acceptor is the Asp176. Ser219 bears the Phosphoserine; by autocatalysis mark. Phosphoserine occurs at positions 369, 456, and 460. The tract at residues 521–571 (ENGFGSRPQGTSPCPAGASEEMEVEERPAGSTPATFSTSGIGLQTQGKQDG) is disordered. The segment covering 552–571 (TPATFSTSGIGLQTQGKQDG) has biased composition (polar residues).

Belongs to the protein kinase superfamily. TKL Ser/Thr protein kinase family. Mg(2+) serves as cofactor. It depends on Mn(2+) as a cofactor. In terms of tissue distribution, predominantly expressed in testis and prostate. Found predominantly in non-germinal Sertoli cells.

It localises to the nucleus. The catalysed reaction is L-seryl-[protein] + ATP = O-phospho-L-seryl-[protein] + ADP + H(+). It carries out the reaction L-threonyl-[protein] + ATP = O-phospho-L-threonyl-[protein] + ADP + H(+). The enzyme catalyses L-tyrosyl-[protein] + ATP = O-phospho-L-tyrosyl-[protein] + ADP + H(+). Its activity is regulated as follows. Activated by autophosphorylation on Ser-219. Its function is as follows. Dual specificity protein kinase activity catalyzing autophosphorylation and phosphorylation of exogenous substrates on both serine/threonine and tyrosine residues. Phosphorylates cofilin at 'Ser-3'. May play an important role in spermatogenesis. This Homo sapiens (Human) protein is Dual specificity testis-specific protein kinase 2 (TESK2).